We begin with the raw amino-acid sequence, 184 residues long: ATP synthase subunit delta (184 aa).

Belongs to the ATPase delta chain family. F-type ATPases have 2 components, F(1) - the catalytic core - and F(0) - the membrane proton channel. F(1) has five subunits: alpha(3), beta(3), gamma(1), delta(1), epsilon(1). F(0) has three main subunits: a(1), b(2) and c(10-14). The alpha and beta chains form an alternating ring which encloses part of the gamma chain. F(1) is attached to F(0) by a central stalk formed by the gamma and epsilon chains, while a peripheral stalk is formed by the delta and b chains.

The protein resides in the cell inner membrane. F(1)F(0) ATP synthase produces ATP from ADP in the presence of a proton or sodium gradient. F-type ATPases consist of two structural domains, F(1) containing the extramembraneous catalytic core and F(0) containing the membrane proton channel, linked together by a central stalk and a peripheral stalk. During catalysis, ATP synthesis in the catalytic domain of F(1) is coupled via a rotary mechanism of the central stalk subunits to proton translocation. In terms of biological role, this protein is part of the stalk that links CF(0) to CF(1). It either transmits conformational changes from CF(0) to CF(1) or is implicated in proton conduction. This is ATP synthase subunit delta from Phenylobacterium zucineum (strain HLK1).